We begin with the raw amino-acid sequence, 483 residues long: Zinc metalloproteinase/disintegrin (483 aa).

The N-terminal stretch at Met-1 to Ser-20 is a signal peptide. The propeptide occupies Ile-21–Glu-191. Residues Arg-198–Pro-394 enclose the Peptidase M12B domain. Ca(2+)-binding residues include Glu-201 and Asp-285. Disulfide bonds link Cys-309–Cys-389, Cys-349–Cys-373, and Cys-351–Cys-356. His-334 provides a ligand contact to Zn(2+). Residue Glu-335 is part of the active site. Zn(2+)-binding residues include His-338 and His-344. Ca(2+)-binding residues include Cys-389 and Asn-392. Residues Leu-395 to Glu-414 constitute a propeptide that is removed on maturation. A Disintegrin domain is found at Thr-402–Ala-483. Intrachain disulfides connect Cys-425-Cys-448, Cys-439-Cys-445, Cys-444-Cys-469, and Cys-457-Cys-476. The short motif at Lys-461 to Asp-463 is the Cell attachment site; atypical (KGD) element.

It belongs to the venom metalloproteinase (M12B) family. P-II subfamily. P-IIe sub-subfamily. Heterodimer with piscivostatin-alpha; disulfide-linked (disintegrin). The cofactor is Zn(2+). Expressed by the venom gland.

It localises to the secreted. In terms of biological role, impairs hemostasis in the envenomed animal. Its function is as follows. Inhibits platelet aggregation induced by ADP. Acts by inhibiting fibrinogen interaction with platelet receptors GPIIb/GPIIIa (ITGA2B/ITGB3). Also inhibits platelet aggregate dissociation in human platelet-rich plasma. The sequence is that of Zinc metalloproteinase/disintegrin from Agkistrodon piscivorus piscivorus (Eastern cottonmouth).